The sequence spans 421 residues: 5-hydroxytryptamine receptor 2 (421 aa).

Residues 1 to 21 (MLCGRLRHTMNSTTCFFSHRT) are Extracellular-facing. The N-linked (GlcNAc...) asparagine glycan is linked to N11. The helical transmembrane segment at 22 to 42 (VLIGIVGSLIIAVSVVGNVLV) threads the bilayer. The Cytoplasmic segment spans residues 43–59 (CLAIFTEPILSHSKSKF). Residues 60 to 79 (FIVSLAVADLLLALLVMTFA) form a helical membrane-spanning segment. Residues 80–95 (LVNSLYGYWLFGETFC) lie on the Extracellular side of the membrane. C95 and C210 form a disulfide bridge. A helical membrane pass occupies residues 96–118 (FIWMSADVMCETASIFSICVISY). Topologically, residues 119-138 (NRLKQVQKPLQYEEFMTTTR) are cytoplasmic. A helical membrane pass occupies residues 139 to 160 (ALLIIASLWICSFVVSFVPFFL). The Extracellular portion of the chain corresponds to 161 to 213 (EWHELSMEEIKTIFKDLISDKVKTSDAHTFSFALEQTLGDNRTSNPKPECLFD). A helical transmembrane segment spans residues 214–234 (VHFIYSVIYSLFCFYIPCTLM). The Cytoplasmic segment spans residues 235-274 (LRNYLRLFLIAKKHHVRIKNLHRLHRNQGTQGSKAARTLT). A helical membrane pass occupies residues 275 to 295 (IITGTFLACWLPFFIINPIEA). The Extracellular portion of the chain corresponds to 296–304 (VDEHLIPLE). Residues 305 to 325 (CFMVTIWLGYFNSCVNPIIYG) form a helical membrane-spanning segment. Residues 326-421 (TSNSKFRAAF…MLSESDTVFS (96 aa)) lie on the Cytoplasmic side of the membrane.

The protein belongs to the G-protein coupled receptor 1 family. As to expression, central nervous system.

It localises to the cell membrane. In terms of biological role, this is one of the several different receptors for 5-hydroxytryptamine (serotonin). 5-HT plays important roles in various behavioral and physiological processes in aplysia. These include feeding, locomotion, circadian rhythm, learning and memory, synaptic plasticity, and synaptic growth. This receptor is mediated by G proteins that stimulate phospholipase C. This Aplysia californica (California sea hare) protein is 5-hydroxytryptamine receptor 2 (5HTB2).